A 327-amino-acid chain; its full sequence is Ran-specific GTPase-activating protein 2 (327 aa).

Disordered regions lie at residues 1-96 (MSET…KKED) and 109-205 (GFGV…KQEV). Over residues 24-83 (PIDKLDGTPKRPREKDQDEQAEETSDKSEAPNKNDEEKKEEGKKDQEPSHKKIKVDDGKT) the composition is skewed to basic and acidic residues. At T31 the chain carries Phosphothreonine. The segment covering 122 to 133 (ATTSTESLPASD) has biased composition (polar residues). Positions 140 to 152 (FAFGSGLSFGSGF) are enriched in low complexity. Composition is skewed to basic and acidic residues over residues 157-179 (NKTE…KVHS) and 189-205 (EDTK…KQEV). S179 bears the Phosphoserine mark. In terms of domain architecture, RanBD1 spans 191-327 (TKDKPKPLKL…YNIIVKSVPK (137 aa)).

As to quaternary structure, interacts with GSP1, XPO1 and SRM1.

Its subcellular location is the nucleus. Its function is as follows. Important for the export of protein containing nuclear export signal (NES) out of the nucleus. Stimulates the GTPase activity of GSP1. This Saccharomyces cerevisiae (strain ATCC 204508 / S288c) (Baker's yeast) protein is Ran-specific GTPase-activating protein 2 (YRB2).